Here is a 98-residue protein sequence, read N- to C-terminus: DNA-binding protein Fis (98 aa).

The segment at residues 74-93 (QTRAALMLGINRSTLRKKLK) is a DNA-binding region (H-T-H motif).

Belongs to the transcriptional regulatory Fis family. Homodimer.

Functionally, activates ribosomal RNA transcription. Plays a direct role in upstream activation of rRNA promoters. This chain is DNA-binding protein Fis, found in Buchnera aphidicola subsp. Acyrthosiphon pisum (strain 5A).